We begin with the raw amino-acid sequence, 278 residues long: Biotin synthase (278 aa).

Positions Met-1–Arg-227 constitute a Radical SAM core domain. [4Fe-4S] cluster contacts are provided by Cys-16, Cys-20, and Cys-23. Cys-60, Cys-95, and Cys-153 together coordinate [2Fe-2S] cluster.

This sequence belongs to the radical SAM superfamily. Biotin synthase family. In terms of assembly, homodimer. It depends on [4Fe-4S] cluster as a cofactor. The cofactor is [2Fe-2S] cluster.

The catalysed reaction is (4R,5S)-dethiobiotin + (sulfur carrier)-SH + 2 reduced [2Fe-2S]-[ferredoxin] + 2 S-adenosyl-L-methionine = (sulfur carrier)-H + biotin + 2 5'-deoxyadenosine + 2 L-methionine + 2 oxidized [2Fe-2S]-[ferredoxin]. Its pathway is cofactor biosynthesis; biotin biosynthesis; biotin from 7,8-diaminononanoate: step 2/2. Catalyzes the conversion of dethiobiotin (DTB) to biotin by the insertion of a sulfur atom into dethiobiotin via a radical-based mechanism. The chain is Biotin synthase from Campylobacter lari (strain RM2100 / D67 / ATCC BAA-1060).